The chain runs to 231 residues: Large ribosomal subunit protein uL1 (231 aa).

It belongs to the universal ribosomal protein uL1 family. As to quaternary structure, part of the 50S ribosomal subunit.

Functionally, binds directly to 23S rRNA. The L1 stalk is quite mobile in the ribosome, and is involved in E site tRNA release. In terms of biological role, protein L1 is also a translational repressor protein, it controls the translation of the L11 operon by binding to its mRNA. This Macrococcus caseolyticus (strain JCSC5402) (Macrococcoides caseolyticum) protein is Large ribosomal subunit protein uL1.